Consider the following 1338-residue polypeptide: Protein dispatched homolog 3 (1338 aa).

The Cytoplasmic portion of the chain corresponds to 1 to 67 (MDTEDDPLLQ…VGWIFTNPYC (67 aa)). Residues 68–88 (AGFILFLGCAIPAVLAVVMFL) form a helical membrane-spanning segment. The Lumenal portion of the chain corresponds to 89–406 (HYPALDIDIS…YEVRRTFNND (318 aa)). The segment at 164–196 (TRAKRSAPQGRTSSPEPRAHPHPGNETSRVTRG) is disordered. Positions 401–559 (RTFNNDMLLA…LFTMPAALGI (159 aa)) constitute an SSD domain. Residues 407-427 (MLLAFISSSCIAVLVYILTSC) traverse the membrane as a helical segment. Position 428 (serine 428) is a topological domain, cytoplasmic. Residues 429-449 (VFLSFFGIASIGLSCLVALFL) traverse the membrane as a helical segment. Topologically, residues 450 to 452 (YHV) are lumenal. A helical membrane pass occupies residues 453-473 (VFGIQYLGILNGVAAFVIVGI). Residues 474 to 517 (GVDDVFVFINTYRQATHLKDLRLRMIHTIQTAGKATFFTSLTTA) lie on the Cytoplasmic side of the membrane. Residues 518–538 (AAYAANIFSQIPAVHDFGLFM) form a helical membrane-spanning segment. Position 539 (serine 539) is a topological domain, lumenal. Residues 540-560 (LIVSCCWVAVLFTMPAALGIW) traverse the membrane as a helical segment. Over 561 to 672 (TLYVSPLESS…WVLWSAVKSR (112 aa)) the chain is Cytoplasmic. The helical transmembrane segment at 673–693 (WVIVGLFLLVLLLSIFFASRL) threads the bilayer. Topologically, residues 694-1128 (RPASRAPVLF…IFMEIIGVQS (435 aa)) are lumenal. Residues 747–768 (SLEKKKRGSASPWGSKGSISDT) form a disordered region. The chain crosses the membrane as a helical span at residues 1129–1149 (ALYGLILSLVICVAAVAVFTT). A topological domain (cytoplasmic) is located at residue histidine 1150. The helical transmembrane segment at 1151 to 1171 (ILLLLPVLLSILGVVCLVVTI) threads the bilayer. Residues 1172–1237 (MYWSGWEMGA…TIEAIRHVGV (66 aa)) are Lumenal-facing. Residues 1238 to 1258 (AIVSSAVTTVIATVPLFFCII) form a helical membrane-spanning segment. Topologically, residues 1259–1266 (APFAKFGK) are cytoplasmic. A helical membrane pass occupies residues 1267-1287 (IVALNTGVSILYTLTVSTALL). Residues 1288–1302 (SIMGPGTFTRSRTSC) lie on the Lumenal side of the membrane. Residues 1303–1323 (LKAVAGVLLAGLLGLCICLAL) form a helical membrane-spanning segment. Residues 1324-1338 (LKGGFKIPLPNGTAL) lie on the Cytoplasmic side of the membrane.

It belongs to the patched family. Expressed in retina, hippocampus and cerebellum. Expressed in the ganglion and bipolar cells of the inner and outer nuclear layers of the retina and in Purkinje cells (at protein level). Expressed strongly in brain and retina, weakly in testis and bone marrow.

It localises to the endoplasmic reticulum membrane. Its subcellular location is the nucleus membrane. The protein resides in the cytoplasmic vesicle membrane. In terms of biological role, plays a role in neuronal proliferation and differentiation. Plays a role in the accumulation of cellular cholesterol. Involved in intracellular lipid droplet formation. May contribute to cholesterol homeostasis in neuronal cells. The protein is Protein dispatched homolog 3 of Gallus gallus (Chicken).